The chain runs to 117 residues: Large ribosomal subunit protein bL19 (117 aa).

It belongs to the bacterial ribosomal protein bL19 family.

Its function is as follows. This protein is located at the 30S-50S ribosomal subunit interface and may play a role in the structure and function of the aminoacyl-tRNA binding site. In Paenarthrobacter aurescens (strain TC1), this protein is Large ribosomal subunit protein bL19.